The primary structure comprises 86 residues: uncharacterized protein (86 aa).

This is an uncharacterized protein from Acidianus bottle-shaped virus (isolate Italy/Pozzuoli) (ABV).